We begin with the raw amino-acid sequence, 332 residues long: Anthranilate phosphoribosyltransferase (332 aa).

5-phospho-alpha-D-ribose 1-diphosphate-binding positions include Gly79, Gly82 to Asp83, Ser87, Asn89 to Thr92, Lys107 to Ser115, and Ser119. Gly79 lines the anthranilate pocket. Ser91 contacts Mg(2+). Asn110 contributes to the anthranilate binding site. Arg165 provides a ligand contact to anthranilate. 2 residues coordinate Mg(2+): Asp223 and Glu224.

Belongs to the anthranilate phosphoribosyltransferase family. Homodimer. The cofactor is Mg(2+).

The enzyme catalyses N-(5-phospho-beta-D-ribosyl)anthranilate + diphosphate = 5-phospho-alpha-D-ribose 1-diphosphate + anthranilate. The protein operates within amino-acid biosynthesis; L-tryptophan biosynthesis; L-tryptophan from chorismate: step 2/5. Catalyzes the transfer of the phosphoribosyl group of 5-phosphorylribose-1-pyrophosphate (PRPP) to anthranilate to yield N-(5'-phosphoribosyl)-anthranilate (PRA). The chain is Anthranilate phosphoribosyltransferase from Erwinia tasmaniensis (strain DSM 17950 / CFBP 7177 / CIP 109463 / NCPPB 4357 / Et1/99).